An 89-amino-acid polypeptide reads, in one-letter code: Small ribosomal subunit protein bS20 (89 aa).

Residues 1-12 (MANHKSAIKRHR) are compositionally biased toward basic residues. The interval 1–26 (MANHKSAIKRHRQSVERAGRNRAART) is disordered.

Belongs to the bacterial ribosomal protein bS20 family.

Binds directly to 16S ribosomal RNA. The sequence is that of Small ribosomal subunit protein bS20 from Desulfovibrio desulfuricans (strain ATCC 27774 / DSM 6949 / MB).